A 697-amino-acid chain; its full sequence is Elongation factor G 2 (697 aa).

The tr-type G domain occupies 5-280 (SKYRNIGIFA…AVVDYLPAPD (276 aa)). GTP-binding positions include 14–21 (AHVDAGKT), 78–82 (DTPGH), and 132–135 (NKLD).

The protein belongs to the TRAFAC class translation factor GTPase superfamily. Classic translation factor GTPase family. EF-G/EF-2 subfamily.

The protein localises to the cytoplasm. In terms of biological role, catalyzes the GTP-dependent ribosomal translocation step during translation elongation. During this step, the ribosome changes from the pre-translocational (PRE) to the post-translocational (POST) state as the newly formed A-site-bound peptidyl-tRNA and P-site-bound deacylated tRNA move to the P and E sites, respectively. Catalyzes the coordinated movement of the two tRNA molecules, the mRNA and conformational changes in the ribosome. In Shewanella sp. (strain MR-7), this protein is Elongation factor G 2.